We begin with the raw amino-acid sequence, 616 residues long: Glucoamylase P (616 aa).

Residues 1–29 (MRLLPSSCAGALSLLCSLAIAAPTELKAR) form the signal peptide. Trp-149 contributes to the substrate binding site. Asn-200 is a glycosylation site (N-linked (GlcNAc...) asparagine). Asp-205 functions as the Proton acceptor in the catalytic mechanism. The active-site Proton donor is the Glu-208. Residue Asn-427 is glycosylated (N-linked (GlcNAc...) asparagine). Residues 501-608 (VTSSCQVSIT…AVTTDDAWMG (108 aa)) enclose the CBM20 domain.

It belongs to the glycosyl hydrolase 15 family.

It is found in the secreted. The catalysed reaction is Hydrolysis of terminal (1-&gt;4)-linked alpha-D-glucose residues successively from non-reducing ends of the chains with release of beta-D-glucose.. This Amorphotheca resinae (Creosote fungus) protein is Glucoamylase P (GAMP).